The sequence spans 471 residues: Cytochrome P450 monooxygenase afvE (471 aa).

A helical membrane pass occupies residues I265–Y285. Heme is bound at residue C410.

The protein belongs to the cytochrome P450 family. The cofactor is heme.

The protein resides in the membrane. Its pathway is secondary metabolite biosynthesis. Cytochrome P450 monooxygenase; part of the gene cluster that mediates the biosynthesis of aflavarin, a bicoumarin that exhibits anti-insectan activity against the fungivorous beetle C.hemipterus. This chain is Cytochrome P450 monooxygenase afvE, found in Aspergillus flavus (strain ATCC 200026 / FGSC A1120 / IAM 13836 / NRRL 3357 / JCM 12722 / SRRC 167).